We begin with the raw amino-acid sequence, 747 residues long: Small G protein signaling modulator 3 (747 aa).

In terms of domain architecture, Rab-GAP TBC spans 111–302; that stretch reads GVPHSMRPQL…RLWDLFFYEG (192 aa). Ser403 carries the phosphoserine modification. A coiled-coil region spans residues 412 to 435; the sequence is EDDLEAMKAKNIKQTELVADLREA. The SH3 domain occupies 477–536; it reads GHPRRAKALLDFERHDDDELGFRKNDIITIVSQKDEHCWVGELNGLRGWFPAKFVEVLDE. Residues 552-715 form the RUN domain; it reads GVTDLVRGTL…FAFSLSQDWE (164 aa).

Belongs to the small G protein signaling modulator family. As to quaternary structure, interacts with GJA1. Interaction with GJA1 induces its degradation. Interacts via its RUN domain with the C-terminal region of NF2. Interacts with RAB3A, RAB4A, RAB5A, RAB8A, RAB11A, RAP1A, RAP1B, RAP2A, RAP2B and PDCD6I. No interaction with RAB27A.

It is found in the cytoplasm. Functionally, may play a cooperative role in NF2-mediated growth suppression of cells. The protein is Small G protein signaling modulator 3 of Bos taurus (Bovine).